The following is a 317-amino-acid chain: Acetyl-coenzyme A carboxylase carboxyl transferase subunit alpha (317 aa).

Residues 40 to 293 (LEKRSADALK…GDIIAASLRS (254 aa)) enclose the CoA carboxyltransferase C-terminal domain.

It belongs to the AccA family. In terms of assembly, acetyl-CoA carboxylase is a heterohexamer composed of biotin carboxyl carrier protein (AccB), biotin carboxylase (AccC) and two subunits each of ACCase subunit alpha (AccA) and ACCase subunit beta (AccD).

It is found in the cytoplasm. It carries out the reaction N(6)-carboxybiotinyl-L-lysyl-[protein] + acetyl-CoA = N(6)-biotinyl-L-lysyl-[protein] + malonyl-CoA. The protein operates within lipid metabolism; malonyl-CoA biosynthesis; malonyl-CoA from acetyl-CoA: step 1/1. In terms of biological role, component of the acetyl coenzyme A carboxylase (ACC) complex. First, biotin carboxylase catalyzes the carboxylation of biotin on its carrier protein (BCCP) and then the CO(2) group is transferred by the carboxyltransferase to acetyl-CoA to form malonyl-CoA. In Brucella canis (strain ATCC 23365 / NCTC 10854 / RM-666), this protein is Acetyl-coenzyme A carboxylase carboxyl transferase subunit alpha.